Here is a 396-residue protein sequence, read N- to C-terminus: S-adenosylmethionine synthase 4 (396 aa).

Glutamate 12 serves as a coordination point for Mg(2+). Histidine 18 is a binding site for ATP. Glutamate 46 serves as a coordination point for K(+). L-methionine contacts are provided by glutamate 59 and glutamine 102. Residues 170–172 (DGK), 238–241 (SGRF), aspartate 249, 255–256 (RK), alanine 272, lysine 276, and lysine 280 contribute to the ATP site. Residue aspartate 249 participates in L-methionine binding. Lysine 280 serves as a coordination point for L-methionine.

It belongs to the AdoMet synthase family. As to quaternary structure, homotetramer. Mn(2+) is required as a cofactor. Requires Mg(2+) as cofactor. Co(2+) serves as cofactor. It depends on K(+) as a cofactor.

It localises to the cytoplasm. The enzyme catalyses L-methionine + ATP + H2O = S-adenosyl-L-methionine + phosphate + diphosphate. It participates in amino-acid biosynthesis; S-adenosyl-L-methionine biosynthesis; S-adenosyl-L-methionine from L-methionine: step 1/1. Its function is as follows. Catalyzes the formation of S-adenosylmethionine from methionine and ATP. The reaction comprises two steps that are both catalyzed by the same enzyme: formation of S-adenosylmethionine (AdoMet) and triphosphate, and subsequent hydrolysis of the triphosphate. This chain is S-adenosylmethionine synthase 4 (SAM4), found in Hordeum vulgare (Barley).